The sequence spans 161 residues: Ribosome maturation factor RimP (161 aa).

This sequence belongs to the RimP family.

It localises to the cytoplasm. In terms of biological role, required for maturation of 30S ribosomal subunits. This is Ribosome maturation factor RimP from Rickettsia typhi (strain ATCC VR-144 / Wilmington).